The sequence spans 161 residues: Endoribonuclease YbeY (161 aa).

Positions 120, 124, and 130 each coordinate Zn(2+).

Belongs to the endoribonuclease YbeY family. The cofactor is Zn(2+).

The protein resides in the cytoplasm. In terms of biological role, single strand-specific metallo-endoribonuclease involved in late-stage 70S ribosome quality control and in maturation of the 3' terminus of the 16S rRNA. This Erythrobacter litoralis (strain HTCC2594) protein is Endoribonuclease YbeY.